Consider the following 463-residue polypeptide: Thiamine-repressible acid phosphatase SPBC21H7.03c (463 aa).

The N-terminal stretch at 1-18 is a signal peptide; that stretch reads MQLCIISLWFLAAFIVNA. The active-site Nucleophile is His-69. 4 N-linked (GlcNAc...) asparagine glycosylation sites follow: Asn-98, Asn-104, Asn-221, and Asn-324. Asp-341 serves as the catalytic Proton donor. N-linked (GlcNAc...) asparagine glycans are attached at residues Asn-439 and Asn-458.

The protein belongs to the histidine acid phosphatase family.

Its subcellular location is the secreted. It is found in the cell wall. It catalyses the reaction a phosphate monoester + H2O = an alcohol + phosphate. Its function is as follows. May dephosphorylate thiamine phosphates. This Schizosaccharomyces pombe (strain 972 / ATCC 24843) (Fission yeast) protein is Thiamine-repressible acid phosphatase SPBC21H7.03c.